Here is a 283-residue protein sequence, read N- to C-terminus: Thymidylate synthase (283 aa).

Arg22 provides a ligand contact to dUMP. Catalysis depends on Cys160, which acts as the Nucleophile. Residues 180–183 (RSCD), Asn191, and 221–223 (HIY) each bind dUMP. Asp183 is a (6R)-5,10-methylene-5,6,7,8-tetrahydrofolate binding site. Position 282 (Ser282) interacts with (6R)-5,10-methylene-5,6,7,8-tetrahydrofolate.

Belongs to the thymidylate synthase family. Bacterial-type ThyA subfamily. Homodimer.

It localises to the cytoplasm. It catalyses the reaction dUMP + (6R)-5,10-methylene-5,6,7,8-tetrahydrofolate = 7,8-dihydrofolate + dTMP. It functions in the pathway pyrimidine metabolism; dTTP biosynthesis. Its function is as follows. Catalyzes the reductive methylation of 2'-deoxyuridine-5'-monophosphate (dUMP) to 2'-deoxythymidine-5'-monophosphate (dTMP) while utilizing 5,10-methylenetetrahydrofolate (mTHF) as the methyl donor and reductant in the reaction, yielding dihydrofolate (DHF) as a by-product. This enzymatic reaction provides an intracellular de novo source of dTMP, an essential precursor for DNA biosynthesis. In Shewanella sediminis (strain HAW-EB3), this protein is Thymidylate synthase.